The chain runs to 440 residues: Chromosome partition protein MukF (440 aa).

Residues 208-236 (LSETSGTLRELQDTLDAAGDKLQANLLRI) are leucine-zipper.

Belongs to the MukF family. As to quaternary structure, interacts, and probably forms a ternary complex, with MukE and MukB via its C-terminal region. The complex formation is stimulated by calcium or magnesium. It is required for an interaction between MukE and MukB.

It localises to the cytoplasm. The protein localises to the nucleoid. Involved in chromosome condensation, segregation and cell cycle progression. May participate in facilitating chromosome segregation by condensation DNA from both sides of a centrally located replisome during cell division. Not required for mini-F plasmid partitioning. Probably acts via its interaction with MukB and MukE. Overexpression results in anucleate cells. It has a calcium binding activity. The protein is Chromosome partition protein MukF of Klebsiella pneumoniae subsp. pneumoniae (strain ATCC 700721 / MGH 78578).